A 388-amino-acid chain; its full sequence is tRNA-specific 2-thiouridylase MnmA (388 aa).

ATP-binding positions include 26–33 and Leu-52; that span reads GLSGGVDS. The active-site Nucleophile is the Cys-113. Residues Cys-113 and Cys-223 are joined by a disulfide bond. Residue Gly-138 participates in ATP binding. Residues 173–175 are interaction with tRNA; sequence KDQ. Cys-223 functions as the Cysteine persulfide intermediate in the catalytic mechanism. Residues 328–329 are interaction with tRNA; that stretch reads RY.

This sequence belongs to the MnmA/TRMU family.

The protein localises to the cytoplasm. The enzyme catalyses S-sulfanyl-L-cysteinyl-[protein] + uridine(34) in tRNA + AH2 + ATP = 2-thiouridine(34) in tRNA + L-cysteinyl-[protein] + A + AMP + diphosphate + H(+). Catalyzes the 2-thiolation of uridine at the wobble position (U34) of tRNA, leading to the formation of s(2)U34. This Prochlorococcus marinus (strain NATL2A) protein is tRNA-specific 2-thiouridylase MnmA.